Here is a 963-residue protein sequence, read N- to C-terminus: MAEGGGCRERPDAETQKSELGALMRTTLQRGAQWYLIDSRWFKQWKKYVGFGSWDMYNVGEHNLFPGPIDNSGLFSDPESQTLKEHLIDELDYVLVPTEAWNKLLNWYGCVEGQQPIVRKVVEHGLFVKHCKVEVYLLELKLCENSDPTNVLSCHFSKADTIATIEKEMRKLFNIPAEREARLWNKYMSNTYEQLSKLDNTVQDAGLYLGQVLVIEPQNEDGTWPRQTLQSKSSTAPSRNFTTSPKSSASPYSSVSDSLIANGDSTSTCGMHSSGVSRGGSGFSASYNCQEPPSSHIQPGLCGLGNLGNTCFMNSALQCLSNTAPLTDYFLKDEYEAEINRDNPLGMKGEIAEAYAELIKQMWSGRDAHVAPRMFKTQVGRFAPQFSGYQQQDSQELLAFLLDGLHEDLNRVKKKPYLELKDANGRPDVVVAKEAWENHRLRNDSVIVDTFHGLFKSTLVCPECAKVSVTFDPFCYLTLPLPLKKDRVMEVFLVPADPHCRPTQYRVTVPLMGAVSDLCEALSRLSGIAAENMVVADVYNHRFHKIFQMDEGLNHIMPRDDIFVYEVCSTSVDGSECVTLPVYFRERKSRPSSTSSASALYGQPLLLSVPKHKLTLESLYQAVCDRISRYVKQPLPDEFGSSPLEPGACNGSRNSCEGEDEEEMEHQEEGKEQLSETEGSGEDEPGSDPSETTQKKIKGQPCPKRLFTFSLVNSYGTADINSLAADGKLLKLNSRSTLAMDWDSETRSLYYDEQESEAYEKHVSMLQPQKKKKTTVALRDCIELFTTMETLGEHDPWYCPNCKKHQQATKKSDLWSLPKILVVHLKRFSYNRYWRDKLDTVVEFPIRGLNMSEFVCNLSARPYVYDLIAVSNHYGAMGVGHYTAYAKNKLNGKWYYFDDSNVSLASEDQIVTKAAYVLFYQRRDDEFYKTPSLSSSGSSDGGTRPSSSQQGLGDDEACSMDTN.

Positions 11–122 constitute a DUSP domain; that stretch reads PDAETQKSEL…GQQPIVRKVV (112 aa). The segment at 27 to 216 is necessary for interaction with SART3; sequence TLQRGAQWYL…LYLGQVLVIE (190 aa). The Nuclear export signal motif lies at 133-141; it reads VEVYLLELK. Positions 142-226 constitute a Ubiquitin-like 1 domain; the sequence is LCENSDPTNV…PQNEDGTWPR (85 aa). Positions 220-255 are disordered; the sequence is EDGTWPRQTLQSKSSTAPSRNFTTSPKSSASPYSSV. The span at 225–243 shows a compositional bias: polar residues; sequence PRQTLQSKSSTAPSRNFTT. The interval 229 to 295 is required for USP4 activation by providing conformational flexibility between the DUSP and catalytic domains; that stretch reads LQSKSSTAPS…SYNCQEPPSS (67 aa). Residues 244-255 show a composition bias toward low complexity; it reads SPKSSASPYSSV. The region spanning 302-923 is the USP domain; that stretch reads CGLGNLGNTC…AAYVLFYQRR (622 aa). Catalysis depends on Cys311, which acts as the Nucleophile. Residues 384 to 386 form a regulates ubiquitin dissociation region; that stretch reads PQF. Residues 405-407 are necessary for interaction with RBL2; sequence LHE. At Ser445 the chain carries Phosphoserine. The necessary for interaction with RB1 and RBL2 stretch occupies residues 459–463; it reads LVCPE. Zn(2+) contacts are provided by Cys461 and Cys464. Residues 483–571 enclose the Ubiquitin-like 2 domain; that stretch reads LKKDRVMEVF…IFVYEVCSTS (89 aa). Residues 485–775 are interacts with DUSP and ubiquitin-like 1 domains and is required for USP4 activation; it reads KDRVMEVFLV…LQPQKKKKTT (291 aa). The disordered stretch occupies residues 637–698; the sequence is DEFGSSPLEP…PSETTQKKIK (62 aa). Ser655 carries the post-translational modification Phosphoserine. The span at 657–666 shows a compositional bias: acidic residues; that stretch reads EGEDEEEMEH. Residues Ser675 and Ser680 each carry the phosphoserine modification. The Nuclear localization signal signature appears at 767-772; that stretch reads QPQKKK. Zn(2+)-binding residues include Cys799 and Cys802. His881 (proton acceptor) is an active-site residue. The tract at residues 928-963 is disordered; that stretch reads YKTPSLSSSGSSDGGTRPSSSQQGLGDDEACSMDTN. Low complexity predominate over residues 932-948; sequence SLSSSGSSDGGTRPSSS. The span at 953-963 shows a compositional bias: acidic residues; that stretch reads GDDEACSMDTN.

It belongs to the peptidase C19 family. USP4 subfamily. As to quaternary structure, interacts with RB1 (both dephosphorylated and hypophosphorylated forms). Interacts with RBL1 and RBL2. Interacts with ADORA2A (via cytoplasmic C-terminus); the interaction is direct. Interacts with SART3; recruits USP4 to its substrate PRPF3. Post-translationally, phosphorylated at Ser-445 by PKB/AKT1 in response to EGF stimulus, promoting its ability deubiquitinate RHEB. In terms of processing, monoubiquitinated by TRIM21. Ubiquitination does not lead to its proteasomal degradation. Autodeubiquitinated.

The protein localises to the cytoplasm. It is found in the nucleus. The catalysed reaction is Thiol-dependent hydrolysis of ester, thioester, amide, peptide and isopeptide bonds formed by the C-terminal Gly of ubiquitin (a 76-residue protein attached to proteins as an intracellular targeting signal).. With respect to regulation, the completion of the deubiquitinase reaction is mediated by the DUSP and ubiquitin-like 1 domains which promotes the release of ubiquitin from the catalytic site enabling subsequent reactions to occur. In terms of biological role, deubiquitinating enzyme that removes conjugated ubiquitin from target proteins. Deubiquitinates PDPK1. Deubiquitinates TRIM21. Deubiquitinates receptor ADORA2A which increases the amount of functional receptor at the cell surface. Deubiquitinates HAS2. Deubiquitinates RHEB in response to EGF signaling, promoting mTORC1 signaling. May regulate mRNA splicing through deubiquitination of the U4 spliceosomal protein PRPF3. This may prevent its recognition by the U5 component PRPF8 thereby destabilizing interactions within the U4/U6.U5 snRNP. May also play a role in the regulation of quality control in the ER. This is Ubiquitin carboxyl-terminal hydrolase 4 (USP4) from Pongo abelii (Sumatran orangutan).